Reading from the N-terminus, the 498-residue chain is Protein nucleotidyltransferase YdiU (498 aa).

8 residues coordinate ATP: G88, G90, R91, K111, D123, G124, R174, and R181. D250 (proton acceptor) is an active-site residue. 2 residues coordinate Mg(2+): N251 and D260. D260 contacts ATP.

Belongs to the SELO family. It depends on Mg(2+) as a cofactor. Requires Mn(2+) as cofactor.

It carries out the reaction L-seryl-[protein] + ATP = 3-O-(5'-adenylyl)-L-seryl-[protein] + diphosphate. The enzyme catalyses L-threonyl-[protein] + ATP = 3-O-(5'-adenylyl)-L-threonyl-[protein] + diphosphate. The catalysed reaction is L-tyrosyl-[protein] + ATP = O-(5'-adenylyl)-L-tyrosyl-[protein] + diphosphate. It catalyses the reaction L-histidyl-[protein] + UTP = N(tele)-(5'-uridylyl)-L-histidyl-[protein] + diphosphate. It carries out the reaction L-seryl-[protein] + UTP = O-(5'-uridylyl)-L-seryl-[protein] + diphosphate. The enzyme catalyses L-tyrosyl-[protein] + UTP = O-(5'-uridylyl)-L-tyrosyl-[protein] + diphosphate. Its function is as follows. Nucleotidyltransferase involved in the post-translational modification of proteins. It can catalyze the addition of adenosine monophosphate (AMP) or uridine monophosphate (UMP) to a protein, resulting in modifications known as AMPylation and UMPylation. This Methylorubrum populi (strain ATCC BAA-705 / NCIMB 13946 / BJ001) (Methylobacterium populi) protein is Protein nucleotidyltransferase YdiU.